Here is a 227-residue protein sequence, read N- to C-terminus: Cytidylate kinase (227 aa).

Residue 12–20 (GPSGAGKGT) participates in ATP binding.

Belongs to the cytidylate kinase family. Type 1 subfamily.

It is found in the cytoplasm. It carries out the reaction CMP + ATP = CDP + ADP. The catalysed reaction is dCMP + ATP = dCDP + ADP. This chain is Cytidylate kinase, found in Marinomonas sp. (strain MWYL1).